A 92-amino-acid chain; its full sequence is DNA-directed RNA polymerase subunit Rpo11 (92 aa).

This sequence belongs to the archaeal Rpo11/eukaryotic RPB11/RPC19 RNA polymerase subunit family. In terms of assembly, part of the RNA polymerase complex.

It is found in the cytoplasm. It catalyses the reaction RNA(n) + a ribonucleoside 5'-triphosphate = RNA(n+1) + diphosphate. Its function is as follows. DNA-dependent RNA polymerase (RNAP) catalyzes the transcription of DNA into RNA using the four ribonucleoside triphosphates as substrates. This is DNA-directed RNA polymerase subunit Rpo11 from Methanosarcina barkeri (strain Fusaro / DSM 804).